We begin with the raw amino-acid sequence, 271 residues long: Acyl-[acyl-carrier-protein]--UDP-N-acetylglucosamine O-acyltransferase (271 aa).

Belongs to the transferase hexapeptide repeat family. LpxA subfamily. As to quaternary structure, homotrimer.

The protein localises to the cytoplasm. The enzyme catalyses a (3R)-hydroxyacyl-[ACP] + UDP-N-acetyl-alpha-D-glucosamine = a UDP-3-O-[(3R)-3-hydroxyacyl]-N-acetyl-alpha-D-glucosamine + holo-[ACP]. It participates in glycolipid biosynthesis; lipid IV(A) biosynthesis; lipid IV(A) from (3R)-3-hydroxytetradecanoyl-[acyl-carrier-protein] and UDP-N-acetyl-alpha-D-glucosamine: step 1/6. Functionally, involved in the biosynthesis of lipid A, a phosphorylated glycolipid that anchors the lipopolysaccharide to the outer membrane of the cell. The protein is Acyl-[acyl-carrier-protein]--UDP-N-acetylglucosamine O-acyltransferase of Sulfurihydrogenibium sp. (strain YO3AOP1).